Here is a 272-residue protein sequence, read N- to C-terminus: Orotidine 5'-phosphate decarboxylase (272 aa).

Catalysis depends on Lys95, which acts as the Proton donor.

It belongs to the OMP decarboxylase family. Type 2 subfamily.

The enzyme catalyses orotidine 5'-phosphate + H(+) = UMP + CO2. The protein operates within pyrimidine metabolism; UMP biosynthesis via de novo pathway; UMP from orotate: step 2/2. This chain is Orotidine 5'-phosphate decarboxylase, found in Bordetella petrii (strain ATCC BAA-461 / DSM 12804 / CCUG 43448).